Consider the following 349-residue polypeptide: D-alanine--D-alanine ligase (349 aa).

Residues 132–335 enclose the ATP-grasp domain; it reads KHVFEAVGVP…YSDLIEKLVD (204 aa). An ATP-binding site is contributed by 162–217; sequence VEKLEFPVFVKPANMGSSVGISKVDDLADLQPALSEAYKYDNRVVIEQGVDAREIE. Residues Asp-289, Glu-302, and Asn-304 each contribute to the Mg(2+) site.

The protein belongs to the D-alanine--D-alanine ligase family. The cofactor is Mg(2+). Mn(2+) is required as a cofactor.

It localises to the cytoplasm. It carries out the reaction 2 D-alanine + ATP = D-alanyl-D-alanine + ADP + phosphate + H(+). It functions in the pathway cell wall biogenesis; peptidoglycan biosynthesis. Cell wall formation. In Lactococcus lactis subsp. cremoris (strain SK11), this protein is D-alanine--D-alanine ligase.